The primary structure comprises 337 residues: Eukaryotic translation initiation factor 3 subunit H (337 aa).

The region spanning 21–153 (VQCDGLAVMK…LKAYRLTPQA (133 aa)) is the MPN domain.

The protein belongs to the eIF-3 subunit H family. Component of the eukaryotic translation initiation factor 3 (eIF-3) complex. The eIF-3 complex interacts with pix. Interacts with mxt.

It localises to the cytoplasm. Functionally, component of the eukaryotic translation initiation factor 3 (eIF-3) complex, which is involved in protein synthesis of a specialized repertoire of mRNAs and, together with other initiation factors, stimulates binding of mRNA and methionyl-tRNAi to the 40S ribosome. The eIF-3 complex specifically targets and initiates translation of a subset of mRNAs involved in cell proliferation. The sequence is that of Eukaryotic translation initiation factor 3 subunit H from Drosophila ananassae (Fruit fly).